The following is a 988-amino-acid chain: Bifunctional glutamine synthetase adenylyltransferase/adenylyl-removing enzyme (988 aa).

An adenylyl removase region spans residues 1–474 (MSSSAIDADI…HYSKLFEGDP (474 aa)). Positions 480–988 (LPIDYAGGAE…FNRLIGGNGE (509 aa)) are adenylyl transferase.

This sequence belongs to the GlnE family. It depends on Mg(2+) as a cofactor.

It catalyses the reaction [glutamine synthetase]-O(4)-(5'-adenylyl)-L-tyrosine + phosphate = [glutamine synthetase]-L-tyrosine + ADP. It carries out the reaction [glutamine synthetase]-L-tyrosine + ATP = [glutamine synthetase]-O(4)-(5'-adenylyl)-L-tyrosine + diphosphate. In terms of biological role, involved in the regulation of glutamine synthetase GlnA, a key enzyme in the process to assimilate ammonia. When cellular nitrogen levels are high, the C-terminal adenylyl transferase (AT) inactivates GlnA by covalent transfer of an adenylyl group from ATP to specific tyrosine residue of GlnA, thus reducing its activity. Conversely, when nitrogen levels are low, the N-terminal adenylyl removase (AR) activates GlnA by removing the adenylyl group by phosphorolysis, increasing its activity. The regulatory region of GlnE binds the signal transduction protein PII (GlnB) which indicates the nitrogen status of the cell. This Rhodopseudomonas palustris (strain HaA2) protein is Bifunctional glutamine synthetase adenylyltransferase/adenylyl-removing enzyme.